The primary structure comprises 665 residues: Long chain acyl-CoA synthetase 2 (665 aa).

ATP is bound at residue 228 to 239; the sequence is IMYTSGTTGEPK. Residues 496–520 form a fatty acid-binding region; that stretch reads DGWFHTGDIGEWQEDGSMKIIDRKK.

This sequence belongs to the ATP-dependent AMP-binding enzyme family. Requires Mg(2+) as cofactor. In terms of tissue distribution, expressed along the entire length of the stem, but expression was not entirely epidermal specific, with some expression found in internal cell layers as well. Was expressed in leave epidermal cells, flowers (sepals, petals, stamens, filaments and carpel), siliques and developing seeds. In roots, expression was detected in an internal cell layer, probably the endodermal layer.

Its subcellular location is the endoplasmic reticulum. It catalyses the reaction a long-chain fatty acid + ATP + CoA = a long-chain fatty acyl-CoA + AMP + diphosphate. It participates in lipid metabolism; fatty acid metabolism. Activation of long-chain fatty acids for both synthesis of cellular lipids, and degradation via beta-oxidation. Acts in the cutin pathway. Preferentially uses palmitate, palmitoleate, oleate and linoleate. Required for repression of lateral root formation through its role in cutin biosynthesis and subsequent aerial tissues permeability. The polypeptide is Long chain acyl-CoA synthetase 2 (LACS2) (Arabidopsis thaliana (Mouse-ear cress)).